A 470-amino-acid chain; its full sequence is Zinc finger and BTB domain-containing protein 8A.1-A (470 aa).

One can recognise a BTB domain in the interval 24 to 92 (CDCHIIVEGQ…VYSGKLPLSG (69 aa)). The segment at 260–280 (EDEDAASHSWPESPQQESLDQ) is disordered. Polar residues predominate over residues 269-278 (WPESPQQESL). 2 consecutive C2H2-type zinc fingers follow at residues 316–338 (FKCPFCTHTVKRKADLKRHLRCH) and 344–367 (YPCEACGKRFTRLEHLRNHFQTIH). The span at 439 to 450 (GRKENGSERAES) shows a compositional bias: basic and acidic residues. Residues 439 to 470 (GRKENGSERAESDLAIQEVVDSEDDELKEKQD) form a disordered region.

The protein resides in the nucleus. In terms of biological role, may be involved in transcriptional regulation. This is Zinc finger and BTB domain-containing protein 8A.1-A (zbtb8a.1-a) from Xenopus laevis (African clawed frog).